Reading from the N-terminus, the 343-residue chain is KRR1 small subunit processome component homolog (343 aa).

In terms of domain architecture, KH spans 126–194; that stretch reads DIIKIGNLVH…VRDIVLETMN (69 aa). Basic residues predominate over residues 230–246; the sequence is KNKNISKRKQPKNKKPK. The segment at 230–343 is disordered; it reads KNKNISKRKQ…LMKANKKNRS (114 aa). Basic and acidic residues-rich tracts occupy residues 272–303 and 318–331; these read LNKEQKQAKKQQERSVKQAEAAKKQDERRNKD and RPAETSKVDVDALK. Residues 272–341 adopt a coiled-coil conformation; that stretch reads LNKEQKQAKK…AKLMKANKKN (70 aa). Over residues 333 to 343 the composition is skewed to basic residues; it reads KLMKANKKNRS.

The protein belongs to the KRR1 family. Monomer. Component of the ribosomal small subunit (SSU) processome.

The protein resides in the nucleus. It is found in the nucleolus. Functionally, required for 40S ribosome biogenesis. Involved in nucleolar processing of pre-18S ribosomal RNA and ribosome assembly. Binds to RNA. Required for female germline development, cell viability during eye development and for survival of dividing cells and epithelial cells during early wing disk development. In Drosophila virilis (Fruit fly), this protein is KRR1 small subunit processome component homolog.